Here is a 282-residue protein sequence, read N- to C-terminus: sn-glycerol-3-phosphate transport system permease protein UgpE (282 aa).

Transmembrane regions (helical) follow at residues 14-34 (LMLV…FIAS), 86-106 (LAIA…IVFF), 112-132 (MGFF…RILP), 146-168 (YAGL…QFFL), 201-221 (IAAL…WPLL), and 248-268 (WNYV…VVVL). The ABC transmembrane type-1 domain occupies 78-269 (LFNSFVVALA…IPPVMVVVLM (192 aa)).

This sequence belongs to the binding-protein-dependent transport system permease family. In terms of assembly, the complex is composed of two ATP-binding proteins (UgpC), two transmembrane proteins (UgpA and UgpE) and a solute-binding protein (UgpB).

The protein localises to the cell inner membrane. Part of the ABC transporter complex UgpBAEC involved in sn-glycerol-3-phosphate (G3P) import. Probably responsible for the translocation of the substrate across the membrane. This Agrobacterium fabrum (strain C58 / ATCC 33970) (Agrobacterium tumefaciens (strain C58)) protein is sn-glycerol-3-phosphate transport system permease protein UgpE (ugpE).